We begin with the raw amino-acid sequence, 113 residues long: Large ribosomal subunit protein uL22 (113 aa).

The protein belongs to the universal ribosomal protein uL22 family. Part of the 50S ribosomal subunit.

Its function is as follows. This protein binds specifically to 23S rRNA; its binding is stimulated by other ribosomal proteins, e.g. L4, L17, and L20. It is important during the early stages of 50S assembly. It makes multiple contacts with different domains of the 23S rRNA in the assembled 50S subunit and ribosome. Functionally, the globular domain of the protein is located near the polypeptide exit tunnel on the outside of the subunit, while an extended beta-hairpin is found that lines the wall of the exit tunnel in the center of the 70S ribosome. In Xylella fastidiosa (strain M12), this protein is Large ribosomal subunit protein uL22.